Reading from the N-terminus, the 49-residue chain is DNA-directed RNA polymerase subunit Rpo12 (49 aa).

Residues Cys-11, Cys-27, and Cys-30 each contribute to the Zn(2+) site.

Belongs to the archaeal Rpo12/eukaryotic RPC10 RNA polymerase subunit family. In terms of assembly, part of the RNA polymerase complex. Zn(2+) serves as cofactor.

It localises to the cytoplasm. The enzyme catalyses RNA(n) + a ribonucleoside 5'-triphosphate = RNA(n+1) + diphosphate. Its function is as follows. DNA-dependent RNA polymerase (RNAP) catalyzes the transcription of DNA into RNA using the four ribonucleoside triphosphates as substrates. This is DNA-directed RNA polymerase subunit Rpo12 from Pyrococcus horikoshii (strain ATCC 700860 / DSM 12428 / JCM 9974 / NBRC 100139 / OT-3).